We begin with the raw amino-acid sequence, 423 residues long: Histidine--tRNA ligase (423 aa).

The protein belongs to the class-II aminoacyl-tRNA synthetase family. Homodimer.

The protein localises to the cytoplasm. The catalysed reaction is tRNA(His) + L-histidine + ATP = L-histidyl-tRNA(His) + AMP + diphosphate + H(+). In Actinobacillus pleuropneumoniae serotype 7 (strain AP76), this protein is Histidine--tRNA ligase.